Consider the following 302-residue polypeptide: Glycine--tRNA ligase alpha subunit (302 aa).

This sequence belongs to the class-II aminoacyl-tRNA synthetase family. Tetramer of two alpha and two beta subunits.

The protein resides in the cytoplasm. It catalyses the reaction tRNA(Gly) + glycine + ATP = glycyl-tRNA(Gly) + AMP + diphosphate. In Haemophilus influenzae (strain 86-028NP), this protein is Glycine--tRNA ligase alpha subunit.